Here is a 149-residue protein sequence, read N- to C-terminus: Stathmin (149 aa).

Residue Ala2 is modified to N-acetylalanine. Phosphoserine is present on Ser4. Positions 4-145 (SDIQVKELEK…NKESKDPADE (142 aa)) constitute an SLD domain. N6-acetyllysine is present on Lys9. Position 16 is a phosphoserine (Ser16). The residue at position 25 (Ser25) is a Phosphoserine; by CDK1, MAPK1 and MAPK3. N6-methyllysine is present on Lys29. At Ser31 the chain carries Phosphoserine. Residue Ser38 is modified to Phosphoserine; by CDK1, MAPK1 and MAPK3. Residues 41-140 (KKKDLSLEEI…EEVRKNKESK (100 aa)) adopt a coiled-coil conformation. At Ser63 the chain carries Phosphoserine; by PKA. An N6-acetyllysine mark is found at Lys100 and Lys119. Residues 121 to 143 (ERLREKDKHIEEVRKNKESKDPA) show a composition bias toward basic and acidic residues. The segment at 121 to 149 (ERLREKDKHIEEVRKNKESKDPADETEAD) is disordered.

The protein belongs to the stathmin family. In terms of assembly, binds to two alpha/beta-tubulin heterodimers. Interacts with KIST. Post-translationally, many different phosphorylated forms are observed depending on specific combinations among the sites which can be phosphorylated. MAPK is responsible for the phosphorylation of stathmin in response to NGF. Phosphorylation at Ser-16 seems to be required for neuron polarization.

It is found in the cytoplasm. Its subcellular location is the cytoskeleton. Its function is as follows. Involved in the regulation of the microtubule (MT) filament system by destabilizing microtubules. Prevents assembly and promotes disassembly of microtubules. Its phosphorylation at Ser-16 may be required for axon formation during neurogenesis. Involved in the control of the learned and innate fear. This is Stathmin (STMN1) from Bos taurus (Bovine).